We begin with the raw amino-acid sequence, 675 residues long: DNA ligase (675 aa).

Residues 32-36 (DAEYD), 81-82 (SL), and glutamate 113 each bind NAD(+). Lysine 115 (N6-AMP-lysine intermediate) is an active-site residue. Positions 136, 173, 291, and 315 each coordinate NAD(+). 4 residues coordinate Zn(2+): cysteine 409, cysteine 412, cysteine 427, and cysteine 433. The region spanning 595–675 (SEKTYFFNKK…ELNSLIRIKE (81 aa)) is the BRCT domain.

Belongs to the NAD-dependent DNA ligase family. LigA subfamily. Requires Mg(2+) as cofactor. It depends on Mn(2+) as a cofactor.

The enzyme catalyses NAD(+) + (deoxyribonucleotide)n-3'-hydroxyl + 5'-phospho-(deoxyribonucleotide)m = (deoxyribonucleotide)n+m + AMP + beta-nicotinamide D-nucleotide.. Its function is as follows. DNA ligase that catalyzes the formation of phosphodiester linkages between 5'-phosphoryl and 3'-hydroxyl groups in double-stranded DNA using NAD as a coenzyme and as the energy source for the reaction. It is essential for DNA replication and repair of damaged DNA. The protein is DNA ligase of Buchnera aphidicola subsp. Acyrthosiphon pisum (strain APS) (Acyrthosiphon pisum symbiotic bacterium).